A 120-amino-acid chain; its full sequence is Holo-[acyl-carrier-protein] synthase (120 aa).

Asp-6 and Glu-55 together coordinate Mg(2+).

This sequence belongs to the P-Pant transferase superfamily. AcpS family. Mg(2+) serves as cofactor.

It is found in the cytoplasm. The enzyme catalyses apo-[ACP] + CoA = holo-[ACP] + adenosine 3',5'-bisphosphate + H(+). Its function is as follows. Transfers the 4'-phosphopantetheine moiety from coenzyme A to a Ser of acyl-carrier-protein. The sequence is that of Holo-[acyl-carrier-protein] synthase from Pelodictyon phaeoclathratiforme (strain DSM 5477 / BU-1).